Consider the following 197-residue polypeptide: MSEFQKVVVIDAKGHLLGRLASVVAKQLLGGQKVVVVRCEELNISGHFFRNKLKYLAYLRKACRYNPSRGAFHFRAPSRIFQKAVRGMLPHKTARGQAALEHLQAVEGIPPPFDKQKRVVVPAALRVLRLKPGRKYCTVGRLSSEVGWKYNDIVAKLEERRKVKSAAFYQAKLAKQKKIASAKEASPVNQKLSQFGY.

Ser193 carries the post-translational modification Phosphoserine.

It belongs to the universal ribosomal protein uL13 family. As to quaternary structure, component of the large ribosomal subunit (LSU). Mature yeast ribosomes consist of a small (40S) and a large (60S) subunit. The 40S small subunit contains 1 molecule of ribosomal RNA (18S rRNA) and at least 33 different proteins. The large 60S subunit contains 3 rRNA molecules (25S, 5.8S and 5S rRNA) and at least 46 different proteins.

The protein localises to the cytoplasm. Functionally, component of the ribosome, a large ribonucleoprotein complex responsible for the synthesis of proteins in the cell. The small ribosomal subunit (SSU) binds messenger RNAs (mRNAs) and translates the encoded message by selecting cognate aminoacyl-transfer RNA (tRNA) molecules. The large subunit (LSU) contains the ribosomal catalytic site termed the peptidyl transferase center (PTC), which catalyzes the formation of peptide bonds, thereby polymerizing the amino acids delivered by tRNAs into a polypeptide chain. The nascent polypeptides leave the ribosome through a tunnel in the LSU and interact with protein factors that function in enzymatic processing, targeting, and the membrane insertion of nascent chains at the exit of the ribosomal tunnel. This chain is Large ribosomal subunit protein uL13B (rpl1601), found in Schizosaccharomyces pombe (strain 972 / ATCC 24843) (Fission yeast).